The chain runs to 388 residues: Succinate--CoA ligase [ADP-forming] subunit beta (388 aa).

The 237-residue stretch at 9–245 (KELLKSYGLP…KSQENERELK (237 aa)) folds into the ATP-grasp domain. Residues Lys46, 53–55 (GRG), Glu100, Tyr103, and Glu108 each bind ATP. The Mg(2+) site is built by Asn200 and Asp214. Residues Asn265 and 322-324 (GIV) contribute to the substrate site.

The protein belongs to the succinate/malate CoA ligase beta subunit family. Heterotetramer of two alpha and two beta subunits. The cofactor is Mg(2+).

It carries out the reaction succinate + ATP + CoA = succinyl-CoA + ADP + phosphate. The catalysed reaction is GTP + succinate + CoA = succinyl-CoA + GDP + phosphate. It functions in the pathway carbohydrate metabolism; tricarboxylic acid cycle; succinate from succinyl-CoA (ligase route): step 1/1. In terms of biological role, succinyl-CoA synthetase functions in the citric acid cycle (TCA), coupling the hydrolysis of succinyl-CoA to the synthesis of either ATP or GTP and thus represents the only step of substrate-level phosphorylation in the TCA. The beta subunit provides nucleotide specificity of the enzyme and binds the substrate succinate, while the binding sites for coenzyme A and phosphate are found in the alpha subunit. The sequence is that of Succinate--CoA ligase [ADP-forming] subunit beta from Psychrobacter cryohalolentis (strain ATCC BAA-1226 / DSM 17306 / VKM B-2378 / K5).